The sequence spans 213 residues: Probable nicotinate-nucleotide adenylyltransferase (213 aa).

This sequence belongs to the NadD family.

The catalysed reaction is nicotinate beta-D-ribonucleotide + ATP + H(+) = deamido-NAD(+) + diphosphate. Its pathway is cofactor biosynthesis; NAD(+) biosynthesis; deamido-NAD(+) from nicotinate D-ribonucleotide: step 1/1. Catalyzes the reversible adenylation of nicotinate mononucleotide (NaMN) to nicotinic acid adenine dinucleotide (NaAD). This is Probable nicotinate-nucleotide adenylyltransferase from Shigella boydii serotype 18 (strain CDC 3083-94 / BS512).